We begin with the raw amino-acid sequence, 144 residues long: 3-hydroxyacyl-[acyl-carrier-protein] dehydratase FabZ (144 aa).

H47 is a catalytic residue.

Belongs to the thioester dehydratase family. FabZ subfamily.

Its subcellular location is the cytoplasm. It catalyses the reaction a (3R)-hydroxyacyl-[ACP] = a (2E)-enoyl-[ACP] + H2O. Involved in unsaturated fatty acids biosynthesis. Catalyzes the dehydration of short chain beta-hydroxyacyl-ACPs and long chain saturated and unsaturated beta-hydroxyacyl-ACPs. This Alcanivorax borkumensis (strain ATCC 700651 / DSM 11573 / NCIMB 13689 / SK2) protein is 3-hydroxyacyl-[acyl-carrier-protein] dehydratase FabZ.